Reading from the N-terminus, the 425-residue chain is Tyrosine--tRNA ligase (425 aa).

Residue Y33 participates in L-tyrosine binding. Residues 38-47 (PTADSLHLGN) carry the 'HIGH' region motif. L-tyrosine is bound by residues Y170 and Q174. Positions 230 to 234 (KFGKS) match the 'KMSKS' region motif. K233 serves as a coordination point for ATP. The 67-residue stretch at 356–422 (KKLIDLLVET…GKKNKMIIRL (67 aa)) folds into the S4 RNA-binding domain.

It belongs to the class-I aminoacyl-tRNA synthetase family. TyrS type 1 subfamily. As to quaternary structure, homodimer.

The protein resides in the cytoplasm. It carries out the reaction tRNA(Tyr) + L-tyrosine + ATP = L-tyrosyl-tRNA(Tyr) + AMP + diphosphate + H(+). Its function is as follows. Catalyzes the attachment of tyrosine to tRNA(Tyr) in a two-step reaction: tyrosine is first activated by ATP to form Tyr-AMP and then transferred to the acceptor end of tRNA(Tyr). The protein is Tyrosine--tRNA ligase of Protochlamydia amoebophila (strain UWE25).